We begin with the raw amino-acid sequence, 1545 residues long: MLNKKFKLNFIALTVAYALTPYTEAALVRDDVDYQIFRDFAENKGKFSVGATNVEVRDKNNRPLGNVLPNGIPMIDFSVVDVDKRIATLVNPQYVVGVKHVSNGVSELHFGNLNGNMNNGNAKAHRDVSSEENRYYTVEKNEYPTKLNGKAVTTEDQAQKRREDYYMPRLDKFVTEVAPIEASTDSSTAGTYNNKDKYPYFVRLGSGTQFIYENGTRYELWLGKEGQKSDAGGYNLKLVGNAYTYGIAGTPYEVNHENDGLIGFGNSNNEYINPKEILSKKPLTNYAVLGDSGSPLFVYDREKGKWLFLGSYDYWAGYNKKSWQEWNIYKPEFAEKIYEQYSAGSLIGSKTDYSWSSNGKTSTITGGEKSLNVDLADGKDKPNHGKSVTFEGSGTLTLNNNIDQGAGGLFFEGDYEVKGTSDNTTWKGAGVSVAEGKTVTWKVHNPQYDRLAKIGKGTLIVEGTGDNKGSLKVGDGTVILKQQTNGSGQHAFASVGIVSGRSTLVLNDDKQVDPNSIYFGFRGGRLDLNGNSLTFDHIRNIDEGARLVNHSTSKHSTVTITGDNLITDPNNVSIYYVKPLEDDNPYAIRQIKYGYQLYFNEENRTYYALKKDASIRSEFPQNRGESNNSWLYMGTEKADAQKNAMNHINNERMNGFNGYFGEEEGKNNGNLNVTFKGKSEQNRFLLTGGTNLNGDLNVQQGTLFLSGRPTPHARDIAGISSTKKDSHFSENNEVVVEDDWINRNFKATNINVTNNATLYSGRNVESITSNITASNNAKVHIGYKAGDTVCVRSDYTGYVTCTTDKLSDKALNSFNPTNLRGNVNLTESANFVLGKANLFGTIQSRGNSQVRLTENSHWHLTGNSDVHQLDLANGHIHLNSADNSNNVTKYNTLTVNSLSGNGSFYYLTDLSNKQGDKVVVTKSATGNFTLQVADKTGEPNHNELTLFDASKAQRDHLNVSLVGNTVDLGAWKYKLRNVNGRYDLYNPEVEKRNQTVDTTNITTPNNIQADVPSVPSNNEEIARVDEAPVPPPAPATPSETTETVAENSKQESKTVEKNEQDATETTAQNREVAKEAKSNVKANTQTNEVAQSGSETKETQTTETKETATVEKEEKAKVETEKTQEVPKVTSQVSPKQEQSETVQPQAEPARENDPTVNIKEPQSQTNTTADTEQPAKETSSNVEQPVTESTTVNTGNSVVENPENTTPATTQPTVNSESSNKPKNRHRRSVRSVPHNVEPATTSSNDRSTVALCDLTSTNTNAVLSDARAKAQFVALNVGKAVSQHISQLEMNNEGQYNVWVSNTSMNKNYSSSQYRRFSSKSTQTQLGWDQTISNNVQLGGVFTYVRNSNNFDKATSKNTLAQVNFYSKYYADNHWYLGIDLGYGKFQSKLQTNHNAKFARHTAQFGLTAGKAFNLGNFGITPIVGVRYSYLSNADFALDQARIKVNPISVKTAFAQVDLSYTYHLGEFSVTPILSARYDANQGSGKINVNGYDFAYNVENQQQYNAGLKLKYHNVKLSLIGGLTKAKQAEKQKTAELKLSFSF.

The first 25 residues, M1–A25, serve as a signal peptide directing secretion. The region spanning A26–K336 is the Peptidase S6 domain. S292 is an active-site residue. Residues T995–E1019 are compositionally biased toward polar residues. Residues T995 to N1246 are disordered. The span at T1036–E1046 shows a compositional bias: low complexity. Residues S1048–Q1060 are compositionally biased toward basic and acidic residues. The span at V1080–S1094 shows a compositional bias: polar residues. The span at E1095–E1125 shows a compositional bias: basic and acidic residues. Composition is skewed to polar residues over residues V1129–P1145 and E1161–K1222. One can recognise an Autotransporter domain in the interval N1293–F1545.

It is found in the periplasm. The protein resides in the secreted. The protein localises to the cell surface. It localises to the cell outer membrane. It carries out the reaction Cleavage of immunoglobulin A molecules at certain Pro-|-Xaa bonds in the hinge region. No small molecule substrates are known.. Virulence factor; cleaves host immunoglobulin A producing intact Fc and Fab fragments. This chain is Immunoglobulin A1 protease autotransporter (iga), found in Haemophilus influenzae.